We begin with the raw amino-acid sequence, 523 residues long: GMP synthase [glutamine-hydrolyzing] (523 aa).

The Glutamine amidotransferase type-1 domain occupies 8 to 205; that stretch reads KILILDFGSQ…VVNICGCETK (198 aa). Residue Cys85 is the Nucleophile of the active site. Active-site residues include His179 and Glu181. Positions 206 to 398 constitute a GMPS ATP-PPase domain; that stretch reads WTAENIIEDA…LGLPAEMINR (193 aa). 233-239 contacts ATP; sequence SGGVDSS.

As to quaternary structure, homodimer.

It carries out the reaction XMP + L-glutamine + ATP + H2O = GMP + L-glutamate + AMP + diphosphate + 2 H(+). It functions in the pathway purine metabolism; GMP biosynthesis; GMP from XMP (L-Gln route): step 1/1. In terms of biological role, catalyzes the synthesis of GMP from XMP. The chain is GMP synthase [glutamine-hydrolyzing] (guaA) from Haemophilus influenzae (strain ATCC 51907 / DSM 11121 / KW20 / Rd).